Reading from the N-terminus, the 97-residue chain is MSLHRDSMVPVNSRLENMDSPILSKICAWGVMLGLFALSLFAMAYACYHKQTSNSCIEEKQGKKQVLKPLDMEPKIVVIMAGNENPTFFAKPTQINA.

Residues 1 to 25 (MSLHRDSMVPVNSRLENMDSPILSK) lie on the Extracellular side of the membrane. A helical transmembrane segment spans residues 26 to 46 (ICAWGVMLGLFALSLFAMAYA). Topologically, residues 47–97 (CYHKQTSNSCIEEKQGKKQVLKPLDMEPKIVVIMAGNENPTFFAKPTQINA) are cytoplasmic. The short motif at 78–82 (VIMAG) is the VIMAG element.

The protein belongs to the GLUTAMINE DUMPER 1 (TC 9.B.60) family. Expressed in the vascular tissues, even in the minor veins of the leaves.

It localises to the membrane. In terms of biological role, probable subunit of an amino acid transporter involved in the regulation of the amino acid metabolism. Stimulates amino acid export by activating nonselective amino acid facilitators. The protein is Protein GLUTAMINE DUMPER 7 (GDU7) of Arabidopsis thaliana (Mouse-ear cress).